The primary structure comprises 341 residues: Transcription factor ETV7 (341 aa).

The PNT domain occupies asparagine 33–arginine 117. The ETS DNA-binding region spans arginine 224–leucine 305. The interval lysine 315–proline 341 is disordered.

The protein belongs to the ETS family. Expressed in hematopoietic tissues.

The protein localises to the nucleus. In terms of biological role, transcriptional repressor; binds to the DNA sequence 5'-CCGGAAGT-3'. Isoform A does not seem to have a repressor activity. Isoform C does not seem to have a repressor activity. This is Transcription factor ETV7 (ETV7) from Homo sapiens (Human).